Here is a 156-residue protein sequence, read N- to C-terminus: SsrA-binding protein (156 aa).

Belongs to the SmpB family.

It localises to the cytoplasm. Required for rescue of stalled ribosomes mediated by trans-translation. Binds to transfer-messenger RNA (tmRNA), required for stable association of tmRNA with ribosomes. tmRNA and SmpB together mimic tRNA shape, replacing the anticodon stem-loop with SmpB. tmRNA is encoded by the ssrA gene; the 2 termini fold to resemble tRNA(Ala) and it encodes a 'tag peptide', a short internal open reading frame. During trans-translation Ala-aminoacylated tmRNA acts like a tRNA, entering the A-site of stalled ribosomes, displacing the stalled mRNA. The ribosome then switches to translate the ORF on the tmRNA; the nascent peptide is terminated with the 'tag peptide' encoded by the tmRNA and targeted for degradation. The ribosome is freed to recommence translation, which seems to be the essential function of trans-translation. In Lactiplantibacillus plantarum (strain ATCC BAA-793 / NCIMB 8826 / WCFS1) (Lactobacillus plantarum), this protein is SsrA-binding protein.